The primary structure comprises 262 residues: Transcription factor bHLH81 (262 aa).

The tract at residues 1–29 (MQPTSVGSSGGGDDGGGRGGGGGLSRSGL) is disordered. Over residues 8-25 (SSGGGDDGGGRGGGGGLS) the composition is skewed to gly residues. A bHLH domain is found at 190-240 (CATHPRSIAERVRRTRISDRIRKLQELVPNMDKQTNTADMLEEAVEYVKVL).

Homodimer. As to expression, expressed in flowers.

The protein resides in the nucleus. This Arabidopsis thaliana (Mouse-ear cress) protein is Transcription factor bHLH81 (BHLH81).